Reading from the N-terminus, the 85-residue chain is SKP1-like protein 6 (85 aa).

The segment at 65 to 85 is interaction with the F-box domain of F-box proteins; that stretch reads MMAANYLNIQSLLDLTFSNCR.

This sequence belongs to the SKP1 family. In terms of assembly, part of a SCF (SKP1-cullin-F-box) protein ligase complex.

Its subcellular location is the nucleus. It participates in protein modification; protein ubiquitination. Functionally, involved in ubiquitination and subsequent proteasomal degradation of target proteins. Together with CUL1, RBX1 and a F-box protein, it forms a SCF E3 ubiquitin ligase complex. The functional specificity of this complex depends on the type of F-box protein. In the SCF complex, it serves as an adapter that links the F-box protein to CUL1. This chain is SKP1-like protein 6 (ASK6), found in Arabidopsis thaliana (Mouse-ear cress).